A 155-amino-acid chain; its full sequence is Putative pre-16S rRNA nuclease (155 aa).

It belongs to the YqgF nuclease family.

The protein resides in the cytoplasm. Its function is as follows. Could be a nuclease involved in processing of the 5'-end of pre-16S rRNA. This chain is Putative pre-16S rRNA nuclease, found in Novosphingobium aromaticivorans (strain ATCC 700278 / DSM 12444 / CCUG 56034 / CIP 105152 / NBRC 16084 / F199).